We begin with the raw amino-acid sequence, 156 residues long: Small ribosomal subunit protein uS7 (156 aa).

The protein belongs to the universal ribosomal protein uS7 family. Part of the 30S ribosomal subunit. Contacts proteins S9 and S11.

In terms of biological role, one of the primary rRNA binding proteins, it binds directly to 16S rRNA where it nucleates assembly of the head domain of the 30S subunit. Is located at the subunit interface close to the decoding center, probably blocks exit of the E-site tRNA. In Shewanella loihica (strain ATCC BAA-1088 / PV-4), this protein is Small ribosomal subunit protein uS7.